We begin with the raw amino-acid sequence, 728 residues long: Ribosome biogenesis protein bop1-B (728 aa).

Residues 1 to 114 (MKRGSKRESG…ENDSSDEEDI (114 aa)) form a disordered region. The segment covering 50-67 (SGTDSSDDEEDHSSEEVQ) has biased composition (acidic residues). 7 WD repeats span residues 393–432 (GHKDLVRCISVSPSGQWLVSGSDDCSVRFWEVSTGRCMKS), 434–474 (VLEG…RLLC), 514–556 (KHQK…SQNP), 559–597 (KNKGQVQKVLFHPTRPFFFVATQRYVRVYNLLKQELTKK), 600–639 (TNCKWVSSIAVHPAGDNLICGSYDSKLAWFDMDLSTKPYK), 643–682 (HHKKALRAVSFHKSYPLFASGSDDASVIVCHGMVYNDLLQ), and 698–728 (HRDLGVLDVMFHPTQPWVFSSGADGTIRLFT).

Belongs to the WD repeat BOP1/ERB1 family. As to quaternary structure, component of the PeBoW complex, composed of bop1, pes1 and wdr12. The complex is held together by bop1, which interacts with pes1 via its N-terminal domain and with wdr12 via a high-affinity interaction between the seven-bladed beta-propeller domains of the 2 proteins. The PeBoW complex associates with the 66S pre-ribosome.

It is found in the nucleus. It localises to the nucleolus. Its subcellular location is the nucleoplasm. Functionally, component of the PeBoW complex, which is required for maturation of 28S and 5.8S ribosomal RNAs and formation of the 60S ribosome. This Xenopus laevis (African clawed frog) protein is Ribosome biogenesis protein bop1-B (bop1-b).